Here is a 386-residue protein sequence, read N- to C-terminus: F420 non-reducing hydrogenase I small subunit (386 aa).

A signal peptide (tat-type signal) is located at residues 1 to 51 (MVEMSTGTTNLVRTLDSMDFLKMDRRTFMKAVSALGATAFLGTYQTEIVNA). Residues cysteine 67, cysteine 70, cysteine 178, cysteine 227, histidine 273, cysteine 276, cysteine 296, and cysteine 302 each contribute to the [4Fe-4S] cluster site. [3Fe-4S] cluster contacts are provided by cysteine 311, cysteine 330, and cysteine 333.

It belongs to the [NiFe]/[NiFeSe] hydrogenase small subunit family. As to quaternary structure, composed of a large subunit (VhoA), a small subunit (VhoG) and a cytochrome subunit (VhoC). Requires [4Fe-4S] cluster as cofactor. The cofactor is [3Fe-4S] cluster. Post-translationally, predicted to be exported by the Tat system. The position of the signal peptide cleavage has not been experimentally proven.

Its subcellular location is the cell membrane. It catalyses the reaction methanophenazine + H2 = dihydromethanophenazine. Functionally, part of the F420 non-reducing hydrogenase I complex that catalyzes the reduction of methanophenazine to dihydromethanophenazine. The sequence is that of F420 non-reducing hydrogenase I small subunit from Methanosarcina mazei (strain ATCC BAA-159 / DSM 3647 / Goe1 / Go1 / JCM 11833 / OCM 88) (Methanosarcina frisia).